The primary structure comprises 577 residues: Cleavage stimulation factor subunit 2 (577 aa).

A Phosphoserine modification is found at serine 14. In terms of domain architecture, RRM spans arginine 16 to serine 94. The tract at residues alanine 108–alanine 248 is interactions with CSTF3 and SYMPK. A Glycyl lysine isopeptide (Lys-Gly) (interchain with G-Cter in SUMO2) cross-link involves residue lysine 189. Residues proline 207–glutamine 230 form a disordered region. Residue arginine 308 is modified to Omega-N-methylarginine. Residues arginine 319–glycine 409 form a disordered region. Positions proline 360 to arginine 373 are enriched in basic and acidic residues. One copy of the 1; approximate repeat lies at isoleucine 410 to glycine 414. Positions isoleucine 410–glycine 469 are 12 X 5 AA tandem repeats of M-E-A-R-[AG]. 2 repeat units span residues methionine 415–alanine 419 and methionine 420–glycine 424. The stretch at leucine 425–glycine 429 is one 4; approximate repeat. Residues leucine 430 to alanine 434 form a 5; approximate repeat. 4 consecutive repeat copies span residues methionine 435–alanine 439, methionine 440–alanine 444, methionine 445–alanine 449, and methionine 450–alanine 454. The 10; approximate repeat unit spans residues methionine 455–glycine 459. The stretch at methionine 460–glycine 464 is repeat 11. Residues methionine 465 to glycine 469 form a 12; approximate repeat. An omega-N-methylarginine mark is found at arginine 468 and arginine 475. Positions leucine 509–proline 532 are disordered. Positions isoleucine 514–proline 577 are interaction with RPO2TC1. Phosphoserine is present on residues serine 518 and serine 524.

As to quaternary structure, the CSTF complex is composed of CSTF1 (50 kDa subunit), CSTF2 (64 kDa subunit) and CSTF3 (77 kDa subunit). CSTF2 directly interacts with CSTF3, SYMPK and RPO2TC1. Interacts with HSF1 in heat-stressed cells. Interacts with CPSF2, CPSF3 and FIP1L1. Interacts with DDX1.

The protein resides in the nucleus. One of the multiple factors required for polyadenylation and 3'-end cleavage of mammalian pre-mRNAs. This subunit is directly involved in the binding to pre-mRNAs. This chain is Cleavage stimulation factor subunit 2 (CSTF2), found in Pongo abelii (Sumatran orangutan).